Reading from the N-terminus, the 1303-residue chain is DNA-directed RNA polymerase subunit beta' (1303 aa).

The Zn(2+) site is built by Cys-60, Cys-62, Cys-75, and Cys-78. Positions 535, 537, and 539 each coordinate Mg(2+). The Zn(2+) site is built by Cys-876, Cys-953, Cys-960, and Cys-963.

It belongs to the RNA polymerase beta' chain family. As to quaternary structure, the RNAP catalytic core consists of 2 alpha, 1 beta, 1 beta' and 1 omega subunit. When a sigma factor is associated with the core the holoenzyme is formed, which can initiate transcription. It depends on Mg(2+) as a cofactor. The cofactor is Zn(2+).

The catalysed reaction is RNA(n) + a ribonucleoside 5'-triphosphate = RNA(n+1) + diphosphate. Its function is as follows. DNA-dependent RNA polymerase catalyzes the transcription of DNA into RNA using the four ribonucleoside triphosphates as substrates. The sequence is that of DNA-directed RNA polymerase subunit beta' from Saccharopolyspora erythraea (strain ATCC 11635 / DSM 40517 / JCM 4748 / NBRC 13426 / NCIMB 8594 / NRRL 2338).